A 103-amino-acid chain; its full sequence is Large ribosomal subunit protein bL21 (103 aa).

The protein belongs to the bacterial ribosomal protein bL21 family. As to quaternary structure, part of the 50S ribosomal subunit. Contacts protein L20.

Its function is as follows. This protein binds to 23S rRNA in the presence of protein L20. The protein is Large ribosomal subunit protein bL21 of Cupriavidus metallidurans (strain ATCC 43123 / DSM 2839 / NBRC 102507 / CH34) (Ralstonia metallidurans).